The following is a 178-amino-acid chain: Peptidyl-prolyl cis-trans isomerase H (178 aa).

The 164-residue stretch at 14–177 (FFDISIGDVP…LPVKITECGQ (164 aa)) folds into the PPIase cyclophilin-type domain.

Belongs to the cyclophilin-type PPIase family. PPIase H subfamily.

The protein resides in the nucleus. It carries out the reaction [protein]-peptidylproline (omega=180) = [protein]-peptidylproline (omega=0). Functionally, PPIases accelerate the folding of proteins. It catalyzes the cis-trans isomerization of proline imidic peptide bonds in oligopeptides. The chain is Peptidyl-prolyl cis-trans isomerase H (cyp7) from Rhizopus delemar (strain RA 99-880 / ATCC MYA-4621 / FGSC 9543 / NRRL 43880) (Mucormycosis agent).